We begin with the raw amino-acid sequence, 314 residues long: 4-hydroxy-3-methylbut-2-enyl diphosphate reductase (314 aa).

Cysteine 12 serves as a coordination point for [4Fe-4S] cluster. (2E)-4-hydroxy-3-methylbut-2-enyl diphosphate contacts are provided by histidine 41 and histidine 74. Residues histidine 41 and histidine 74 each coordinate dimethylallyl diphosphate. Isopentenyl diphosphate is bound by residues histidine 41 and histidine 74. Cysteine 96 lines the [4Fe-4S] cluster pocket. Histidine 124 is a (2E)-4-hydroxy-3-methylbut-2-enyl diphosphate binding site. Residue histidine 124 coordinates dimethylallyl diphosphate. Residue histidine 124 coordinates isopentenyl diphosphate. Glutamate 126 (proton donor) is an active-site residue. Threonine 167 contacts (2E)-4-hydroxy-3-methylbut-2-enyl diphosphate. Cysteine 197 serves as a coordination point for [4Fe-4S] cluster. Positions 225, 226, 227, and 269 each coordinate (2E)-4-hydroxy-3-methylbut-2-enyl diphosphate. The dimethylallyl diphosphate site is built by serine 225, serine 226, asparagine 227, and serine 269. Isopentenyl diphosphate contacts are provided by serine 225, serine 226, asparagine 227, and serine 269.

It belongs to the IspH family. The cofactor is [4Fe-4S] cluster.

It catalyses the reaction isopentenyl diphosphate + 2 oxidized [2Fe-2S]-[ferredoxin] + H2O = (2E)-4-hydroxy-3-methylbut-2-enyl diphosphate + 2 reduced [2Fe-2S]-[ferredoxin] + 2 H(+). It carries out the reaction dimethylallyl diphosphate + 2 oxidized [2Fe-2S]-[ferredoxin] + H2O = (2E)-4-hydroxy-3-methylbut-2-enyl diphosphate + 2 reduced [2Fe-2S]-[ferredoxin] + 2 H(+). Its pathway is isoprenoid biosynthesis; dimethylallyl diphosphate biosynthesis; dimethylallyl diphosphate from (2E)-4-hydroxy-3-methylbutenyl diphosphate: step 1/1. The protein operates within isoprenoid biosynthesis; isopentenyl diphosphate biosynthesis via DXP pathway; isopentenyl diphosphate from 1-deoxy-D-xylulose 5-phosphate: step 6/6. Functionally, catalyzes the conversion of 1-hydroxy-2-methyl-2-(E)-butenyl 4-diphosphate (HMBPP) into a mixture of isopentenyl diphosphate (IPP) and dimethylallyl diphosphate (DMAPP). Acts in the terminal step of the DOXP/MEP pathway for isoprenoid precursor biosynthesis. This Actinobacillus pleuropneumoniae serotype 5b (strain L20) protein is 4-hydroxy-3-methylbut-2-enyl diphosphate reductase.